A 138-amino-acid polypeptide reads, in one-letter code: Large ribosomal subunit protein uL16 (138 aa).

Basic residues predominate over residues 1 to 16 (MLIPRKVAHRKQHHPG). Positions 1–24 (MLIPRKVAHRKQHHPGRTGAAKGG) are disordered.

This sequence belongs to the universal ribosomal protein uL16 family. In terms of assembly, part of the 50S ribosomal subunit.

Functionally, binds 23S rRNA and is also seen to make contacts with the A and possibly P site tRNAs. The protein is Large ribosomal subunit protein uL16 of Frankia alni (strain DSM 45986 / CECT 9034 / ACN14a).